A 297-amino-acid polypeptide reads, in one-letter code: Transcription factor LRL3 (297 aa).

The segment at 59-109 (PDQFHHPQESGGPTMGSQEGLQPQGTVSTTSAPVVRQKPRVRARRGQATDP) is disordered. Residues 73–90 (MGSQEGLQPQGTVSTTSA) show a composition bias toward polar residues. The segment at 105-118 (QATDPHSIAERLRR) is basic motif; degenerate. In terms of domain architecture, bHLH spans 105–154 (QATDPHSIAERLRRERIAERMKSLQELVPNTNKTDKASMLDEIIEYVRFL). The segment at 119–154 (ERIAERMKSLQELVPNTNKTDKASMLDEIIEYVRFL) is helix-loop-helix motif.

In terms of assembly, homodimer. In terms of tissue distribution, expressed in trichomes of the root maturation zone. Detected constitutively in flowers.

It localises to the nucleus. Functionally, transcription factor that regulates the development of root hairs. Does not seem to be involved in the regulation of sperm cell development. The protein is Transcription factor LRL3 of Arabidopsis thaliana (Mouse-ear cress).